Consider the following 262-residue polypeptide: Shikimate dehydrogenase (NADP(+)) (262 aa).

Residues 15–17 (SRS) and threonine 62 contribute to the shikimate site. Lysine 66 serves as the catalytic Proton acceptor. Glutamate 78 contacts NADP(+). Residues asparagine 87 and aspartate 102 each coordinate shikimate. NADP(+)-binding positions include 126 to 130 (GAGGA), 150 to 155 (NRTLAR), and methionine 214. Tyrosine 216 contacts shikimate. NADP(+) is bound at residue glycine 236.

It belongs to the shikimate dehydrogenase family. As to quaternary structure, homodimer.

It catalyses the reaction shikimate + NADP(+) = 3-dehydroshikimate + NADPH + H(+). The protein operates within metabolic intermediate biosynthesis; chorismate biosynthesis; chorismate from D-erythrose 4-phosphate and phosphoenolpyruvate: step 4/7. Its function is as follows. Involved in the biosynthesis of the chorismate, which leads to the biosynthesis of aromatic amino acids. Catalyzes the reversible NADPH linked reduction of 3-dehydroshikimate (DHSA) to yield shikimate (SA). This is Shikimate dehydrogenase (NADP(+)) from Acinetobacter baumannii (strain AB307-0294).